We begin with the raw amino-acid sequence, 66 residues long: Venom peptide CtAPI (66 aa).

5 cysteine pairs are disulfide-bonded: cysteine 7-cysteine 44, cysteine 16-cysteine 40, cysteine 20-cysteine 33, cysteine 24-cysteine 64, and cysteine 46-cysteine 58. Positions cysteine 7–cysteine 64 constitute a TIL domain.

It belongs to the serine protease inhibitor-like (TIL domain-containing) family. In terms of tissue distribution, expressed by the venom gland.

It is found in the secreted. Its function is as follows. Serine protease inhibitor. The protein is Venom peptide CtAPI of Chaerilus tricostatus (Scorpion).